Reading from the N-terminus, the 309-residue chain is N(5)-(carboxyethyl)ornithine synthase (309 aa).

Residues Arg-15, Lys-71, and His-92 each contribute to the pyruvate site. Position 171–176 (171–176 (GSGNVA)) interacts with NADP(+).

Belongs to the AlaDH/PNT family. CEOS subfamily. In terms of assembly, homotetramer.

The enzyme catalyses N(5)-[1(S)-1-carboxyethyl]-L-ornithine + NADP(+) + H2O = L-ornithine + pyruvate + NADPH + H(+). Catalyzes the NADPH-dependent reductive condensation between pyruvic acid and the side chain amino group of L-ornithine to form N(5)-(L-1-carboxyethyl)-L-ornithine. To a lesser extent, can also use L-lysine as substrate (yielding N(6)-(L-1-carboxyethyl)-L-lysine). This chain is N(5)-(carboxyethyl)ornithine synthase (ceo), found in Lactococcus lactis subsp. lactis (strain IL1403) (Streptococcus lactis).